The chain runs to 236 residues: Small ribosomal subunit protein uS2c (236 aa).

This sequence belongs to the universal ribosomal protein uS2 family.

Its subcellular location is the plastid. It is found in the chloroplast. The polypeptide is Small ribosomal subunit protein uS2c (rps2) (Nymphaea alba (White water-lily)).